Consider the following 176-residue polypeptide: Probable inosine/xanthosine triphosphatase (176 aa).

Position 36 (aspartate 36) interacts with Mg(2+).

This sequence belongs to the YjjX NTPase family. In terms of assembly, homodimer. Requires Mg(2+) as cofactor. It depends on Mn(2+) as a cofactor.

It carries out the reaction XTP + H2O = XDP + phosphate + H(+). It catalyses the reaction ITP + H2O = IDP + phosphate + H(+). In terms of biological role, phosphatase that hydrolyzes non-canonical purine nucleotides such as XTP and ITP to their respective diphosphate derivatives. Probably excludes non-canonical purines from DNA/RNA precursor pool, thus preventing their incorporation into DNA/RNA and avoiding chromosomal lesions. The protein is Probable inosine/xanthosine triphosphatase of Saccharolobus islandicus (strain M.16.4 / Kamchatka #3) (Sulfolobus islandicus).